A 331-amino-acid polypeptide reads, in one-letter code: Phenylalanine--tRNA ligase alpha subunit (331 aa).

Glutamate 252 is a binding site for Mg(2+).

This sequence belongs to the class-II aminoacyl-tRNA synthetase family. Phe-tRNA synthetase alpha subunit type 1 subfamily. As to quaternary structure, tetramer of two alpha and two beta subunits. Mg(2+) serves as cofactor.

It is found in the cytoplasm. The enzyme catalyses tRNA(Phe) + L-phenylalanine + ATP = L-phenylalanyl-tRNA(Phe) + AMP + diphosphate + H(+). This Xanthomonas euvesicatoria pv. vesicatoria (strain 85-10) (Xanthomonas campestris pv. vesicatoria) protein is Phenylalanine--tRNA ligase alpha subunit.